Consider the following 549-residue polypeptide: Speedy protein E3 (549 aa).

Low complexity predominate over residues 1 to 15 (MTSHQPQPQEEQSPQ). Disordered stretches follow at residues 1-74 (MTSH…EPEE), 126-145 (KREC…APEP), 188-218 (SPPR…APEP), 261-291 (SPPR…APEP), and 334-364 (SPPR…APEP). Acidic residues-rich tracts occupy residues 58–74 (DESD…EPEE), 131–145 (DESD…APEP), 204–218 (DESD…APEP), 277–291 (DESD…APEP), and 350–364 (DESD…APEP).

It belongs to the Speedy/Ringo family. As to expression, predominantly expressed in testis and spleen.

The sequence is that of Speedy protein E3 from Homo sapiens (Human).